The following is a 490-amino-acid chain: GTPase Der (490 aa).

2 consecutive EngA-type G domains span residues 3-166 and 196-369; these read PVIA…PRDD and IKIA…KSAV. Residues 9–16, 56–60, and 118–121 each bind GTP; these read GRPNVGKS, DTGGI, and NKVD. The interval 162 to 189 is disordered; sequence FPRDDDEPAEGEEEEVVAEGEEAKRIPG. Residues 164–181 are compositionally biased toward acidic residues; that stretch reads RDDDEPAEGEEEEVVAEG. Residues 202-209, 249-253, and 314-317 contribute to the GTP site; these read GRPNVGKS, DTAGV, and NKWD. One can recognise a KH-like domain in the interval 370-454; that stretch reads TRWPTSRLTQ…PIRIEFKGGE (85 aa). Residues 453–490 form a disordered region; sequence GENPYEGNKNTLTDRQVNKKRRLMSHNKKASKKRRDKK. The span at 470–490 shows a compositional bias: basic residues; the sequence is NKKRRLMSHNKKASKKRRDKK.

The protein belongs to the TRAFAC class TrmE-Era-EngA-EngB-Septin-like GTPase superfamily. EngA (Der) GTPase family. In terms of assembly, associates with the 50S ribosomal subunit.

Its function is as follows. GTPase that plays an essential role in the late steps of ribosome biogenesis. This is GTPase Der from Pseudomonas fluorescens (strain Pf0-1).